The chain runs to 738 residues: Adhesion G protein-coupled receptor L4 (738 aa).

Positions Met1 to Thr19 are cleaved as a signal peptide. Positions Gln20 to Glu56 constitute an EGF-like 1 domain. The Extracellular portion of the chain corresponds to Gln20–Gln480. Disulfide bonds link Cys22/Cys32, Cys26/Cys41, Cys43/Cys55, Cys61/Cys73, Cys67/Cys82, Cys84/Cys105, Cys111/Cys123, Cys117/Cys132, and Cys134/Cys155. In terms of domain architecture, EGF-like 2; calcium-binding spans Asp57 to Gln106. Residue Asn62 is glycosylated (N-linked (GlcNAc...) asparagine). One can recognise an EGF-like 3; calcium-binding domain in the interval Asp107–Gln156. Asn112 carries N-linked (GlcNAc...) asparagine glycosylation. 6 N-linked (GlcNAc...) asparagine glycosylation sites follow: Asn175, Asn226, Asn297, Asn421, Asn429, and Asn443. A GAIN-B domain is found at Thr292–Ile467. Cystine bridges form between Cys417/Cys449 and Cys437/Cys451. Positions Cys417–Ile467 are GPS. A helical transmembrane segment spans residues Leu481 to Ser501. At Glu502 to Gln522 the chain is on the cytoplasmic side. Residues Leu523–Gly543 form a helical membrane-spanning segment. The Extracellular segment spans residues Leu544–Tyr547. A helical transmembrane segment spans residues Phe548 to Val568. The Cytoplasmic segment spans residues Gly569–Asn580. The chain crosses the membrane as a helical span at residues Phe581 to Tyr601. Topologically, residues Arg602 to Ser621 are extracellular. The helical transmembrane segment at Phe622–Tyr642 threads the bilayer. At Lys643–Arg666 the chain is on the cytoplasmic side. Residues Gly667–Val687 form a helical membrane-spanning segment. Topologically, residues His688–Ala694 are extracellular. The helical transmembrane segment at Tyr695–Leu715 threads the bilayer. Residues Ser716–Arg738 are Cytoplasmic-facing.

Belongs to the G-protein coupled receptor 2 family. Adhesion G-protein coupled receptor (ADGR) subfamily. In terms of assembly, heterodimer of 2 chains generated by proteolytic processing; the large extracellular N-terminal fragment and the membrane-bound C-terminal fragment predominantly remain associated and non-covalently linked. In terms of processing, proteolytically cleaved into 2 subunits, an extracellular alpha subunit and a seven-transmembrane subunit. Glycosylated. As to expression, abundantly expressed in heart, lung, and kidney. Less evident expression is observed in brain, skeletal muscle, liver and spleen. No expression is detected in testis.

It localises to the cell membrane. Its function is as follows. Endothelial orphan receptor that acts as a key regulator of angiogenesis. The sequence is that of Adhesion G protein-coupled receptor L4 (Adgrl4) from Rattus norvegicus (Rat).